The primary structure comprises 145 residues: D-aminoacyl-tRNA deacylase (145 aa).

Positions 137–138 (GP) match the Gly-cisPro motif, important for rejection of L-amino acids motif.

Belongs to the DTD family. As to quaternary structure, homodimer.

It is found in the cytoplasm. The catalysed reaction is glycyl-tRNA(Ala) + H2O = tRNA(Ala) + glycine + H(+). The enzyme catalyses a D-aminoacyl-tRNA + H2O = a tRNA + a D-alpha-amino acid + H(+). In terms of biological role, an aminoacyl-tRNA editing enzyme that deacylates mischarged D-aminoacyl-tRNAs. Also deacylates mischarged glycyl-tRNA(Ala), protecting cells against glycine mischarging by AlaRS. Acts via tRNA-based rather than protein-based catalysis; rejects L-amino acids rather than detecting D-amino acids in the active site. By recycling D-aminoacyl-tRNA to D-amino acids and free tRNA molecules, this enzyme counteracts the toxicity associated with the formation of D-aminoacyl-tRNA entities in vivo and helps enforce protein L-homochirality. The sequence is that of D-aminoacyl-tRNA deacylase from Salmonella enteritidis PT4 (strain P125109).